A 247-amino-acid chain; its full sequence is Granulin (247 aa).

Belongs to the polyhedrin family.

Component of the virus occlusion bodies, which are large proteinaceous structures, that protect the virus from the outside environment for extended periods until they are ingested by insect larvae. This is Granulin from Pieris brassicae granulosis virus (PbGV).